Here is a 154-residue protein sequence, read N- to C-terminus: Ribonuclease H (154 aa).

Residues 1–142 form the RNase H type-1 domain; sequence MTKHVEIFTD…CDELARTAAE (142 aa). Asp-10, Glu-48, Asp-70, and Asp-134 together coordinate Mg(2+).

Belongs to the RNase H family. As to quaternary structure, monomer. Requires Mg(2+) as cofactor.

The protein resides in the cytoplasm. The catalysed reaction is Endonucleolytic cleavage to 5'-phosphomonoester.. Its function is as follows. Endonuclease that specifically degrades the RNA of RNA-DNA hybrids. In Vibrio campbellii (strain ATCC BAA-1116), this protein is Ribonuclease H.